Reading from the N-terminus, the 1088-residue chain is MTTAQRDSLLWKLAGLLRESGDVVLSGCSTLSLLTPTLQQLNHVFELHLGPWGPGQTGFVALPSHPADSPVILQLQFLFDVLQKTLSLKLVHVAGPGPTGPIKIFPFKSLRHLELRGVPLHCLHGLRGIYSQLETLICSRSLQALEELLSACGGDFCSALPWLALLSANFSYNALTALDSSLRLLSALRFLNLSHNQVQDCQGFLMDLCELHHLDISYNRLHLVPRMGPSGAALGVLILRGNELRSLHGLEQLRNLRHLDLAYNLLEGHRELSPLWLLAELRKLYLEGNPLWFHPEHRAATAQYLSPRARDAATGFLLDGKVLSLTDFQTHTSLGLSPMGPPLPWPVGSTPETSGGPDLSDSLSSGGVVTQPLLHKVKSRVRVRRASISEPSDTDPEPRTLNPSPAGWFVQQHPELELMSSFRERFGRNWLQYRSHLEPSGNPLPATPTTSAPSAPPASSQGPDTAPRPSPPQEEARGPQESPQKMSEEVRAEPQEEEEEKEGKEEKEEGEMVEQGEEEAGEEEEEEQDQKEVEAELCRPLLVCPLEGPEGVRGRECFLRVTSAHLFEVELQAARTLERLELQSLEAAEIEPEAQAQRSPRPTGSDLLPGAPILSLRFSYICPDRQLRRYLVLEPDAHAAVQELLAVLTPVTNVAREQLGEARDLLLGRFQCLRCGHEFKPEEPRMGLDSEEGWRPLFQKTESPAVCPNCGSDHVVLLAVSRGTPNRERKQGEQSLAPSPSASPVCHPPGHGDHLDRAKNSPPQAPSTRDHGSWSLSPPPERCGLRSVDHRLRLFLDVEVFSDAQEEFQCCLKVPVALAGHTGEFMCLVVVSDRRLYLLKVTGEMREPPASWLQLTLAVPLQDLSGIELGLAGQSLRLEWAAGAGRCVLLPRDARHCRAFLEELLDVLQSLPPAWRNCVSATEEEVTPQHRLWPLLEKDSSLEARQFFYLRAFLVEGPSTCLVSLLLTPSTLFLLDEDAAGSPAEPSPPAASGEASEKVPPSGPGPAVRVREQQPLSSLSSVLLYRSAPEDLRLLFYDEVSRLESFWALRVVCQEQLTALLAWIREPWEELFSIGLRTVIQEALALDR.

8 LRR repeats span residues 109 to 130 (SLRH…RGIY), 132 to 152 (QLET…LSAC), 164 to 185 (ALLS…LRLL), 187 to 209 (ALRF…MDLC), 210 to 231 (ELHH…GPSG), 233 to 254 (ALGV…EQLR), 255 to 276 (NLRH…SPLW), and 280 to 301 (ELRK…RAAT). Disordered regions lie at residues 335–407 (GLSP…SPAG) and 437–533 (LEPS…QKEV). Low complexity predominate over residues 346–367 (PVGSTPETSGGPDLSDSLSSGG). The span at 375 to 385 (HKVKSRVRVRR) shows a compositional bias: basic residues. 3 positions are modified to phosphoserine: Ser-387, Ser-389, and Ser-392. The span at 447–460 (TPTTSAPSAPPASS) shows a compositional bias: low complexity. Residue Ser-470 is modified to Phosphoserine. Positions 508 to 529 (EEGEMVEQGEEEAGEEEEEEQD) are enriched in acidic residues. Residue Ser-599 is modified to Phosphoserine. Disordered stretches follow at residues 724–780 (TPNR…SPPP) and 978–1009 (DAAG…PAVR). Over residues 733–742 (EQSLAPSPSA) the composition is skewed to polar residues. Residues 750–759 (GHGDHLDRAK) are compositionally biased toward basic and acidic residues. Phosphoserine is present on residues Ser-761, Ser-773, and Ser-777. Over residues 978–994 (DAAGSPAEPSPPAASGE) the composition is skewed to low complexity.

It belongs to the STK11IP family. In terms of assembly, found in a ternary complex composed of STK11/LKB1, STK11IP and SMAD4. Interacts with STK11/LKB1 and SMAD4.

The protein resides in the cytoplasm. Its function is as follows. May regulate STK11/LKB1 function by controlling its subcellular localization. The chain is Serine/threonine-protein kinase 11-interacting protein (STK11IP) from Homo sapiens (Human).